Reading from the N-terminus, the 346-residue chain is N-acetyl-gamma-glutamyl-phosphate reductase (346 aa).

Residue Cys149 is part of the active site.

This sequence belongs to the NAGSA dehydrogenase family. Type 1 subfamily.

It localises to the cytoplasm. The catalysed reaction is N-acetyl-L-glutamate 5-semialdehyde + phosphate + NADP(+) = N-acetyl-L-glutamyl 5-phosphate + NADPH + H(+). The protein operates within amino-acid biosynthesis; L-arginine biosynthesis; N(2)-acetyl-L-ornithine from L-glutamate: step 3/4. Its function is as follows. Catalyzes the NADPH-dependent reduction of N-acetyl-5-glutamyl phosphate to yield N-acetyl-L-glutamate 5-semialdehyde. The sequence is that of N-acetyl-gamma-glutamyl-phosphate reductase from Geobacter metallireducens (strain ATCC 53774 / DSM 7210 / GS-15).